A 695-amino-acid polypeptide reads, in one-letter code: Rho-related BTB domain-containing protein 1 (695 aa).

The segment at 1–210 (MDSDMDYERP…DNAIRAALIS (210 aa)) is rho-like. Residues 21 to 28 (GDNAVGKT), 84 to 88 (DTFGD), and 140 to 143 (CQLD) each bind GTP. BTB domains follow at residues 266–426 (ADVL…DEKE) and 484–551 (SDVT…SPNL). The interval 325 to 351 (SLGSAEEGKEGPQRTPQADPGASSGQD) is disordered.

It belongs to the small GTPase superfamily. Rho family. In terms of tissue distribution, highest expression in heart and testis.

This chain is Rho-related BTB domain-containing protein 1 (Rhobtb1), found in Mus musculus (Mouse).